We begin with the raw amino-acid sequence, 373 residues long: tRNA-specific 2-thiouridylase MnmA (373 aa).

Residues 18–25 (AMSGGVDS) and leucine 44 contribute to the ATP site. Cysteine 117 (nucleophile) is an active-site residue. Cysteine 117 and cysteine 214 are oxidised to a cystine. Residue glycine 141 participates in ATP binding. The interval 163 to 165 (RDQ) is interaction with tRNA. Residue cysteine 214 is the Cysteine persulfide intermediate of the active site.

This sequence belongs to the MnmA/TRMU family.

The protein resides in the cytoplasm. The enzyme catalyses S-sulfanyl-L-cysteinyl-[protein] + uridine(34) in tRNA + AH2 + ATP = 2-thiouridine(34) in tRNA + L-cysteinyl-[protein] + A + AMP + diphosphate + H(+). Its function is as follows. Catalyzes the 2-thiolation of uridine at the wobble position (U34) of tRNA, leading to the formation of s(2)U34. The protein is tRNA-specific 2-thiouridylase MnmA of Paramagnetospirillum magneticum (strain ATCC 700264 / AMB-1) (Magnetospirillum magneticum).